The sequence spans 642 residues: Threonine--tRNA ligase (642 aa).

The 61-residue stretch at 1-61 (MPVITLPDGS…ETDAELSIIT (61 aa)) folds into the TGS domain. The catalytic stretch occupies residues 243–534 (DHRKIGKQLD…LIEEYAGRFP (292 aa)). 3 residues coordinate Zn(2+): cysteine 334, histidine 385, and histidine 511.

The protein belongs to the class-II aminoacyl-tRNA synthetase family. Homodimer. It depends on Zn(2+) as a cofactor.

Its subcellular location is the cytoplasm. It carries out the reaction tRNA(Thr) + L-threonine + ATP = L-threonyl-tRNA(Thr) + AMP + diphosphate + H(+). Its function is as follows. Catalyzes the attachment of threonine to tRNA(Thr) in a two-step reaction: L-threonine is first activated by ATP to form Thr-AMP and then transferred to the acceptor end of tRNA(Thr). Also edits incorrectly charged L-seryl-tRNA(Thr). This chain is Threonine--tRNA ligase, found in Shewanella baltica (strain OS155 / ATCC BAA-1091).